A 466-amino-acid polypeptide reads, in one-letter code: Cytochrome b561 and DOMON domain-containing protein At3g59070 (466 aa).

The N-terminal stretch at Met-1–Ala-25 is a signal peptide. The region spanning Leu-57–Gly-172 is the DOMON domain. A Cytochrome b561 domain is found at Arg-179–Trp-380. Transmembrane regions (helical) follow at residues Ile-219–Ala-239, Trp-252–Leu-272, and Thr-287–Leu-307. His-220, His-256, His-289, and His-325 together coordinate heme b. Helical transmembrane passes span Thr-327–Leu-347 and Ile-355–Gln-375.

Heme b serves as cofactor.

Its subcellular location is the membrane. May act as a catecholamine-responsive trans-membrane electron transporter. The protein is Cytochrome b561 and DOMON domain-containing protein At3g59070 of Arabidopsis thaliana (Mouse-ear cress).